The following is a 1615-amino-acid chain: ABC transporter A family member 4 (1615 aa).

Transmembrane regions (helical) follow at residues 30–50, 233–253, 278–298, 308–328, 337–357, 365–385, and 405–425; these read ILLP…SMII, GVFI…NIVI, SIIS…ILSA, ITLI…AFIL, YAGL…IIIG, LKLL…YVWC, and YEII…LWYL. One can recognise an ABC transmembrane type-2 domain in the interval 182-383; that stretch reads TQIQTGVDQA…PIAISVANYV (202 aa). Positions 492–727 constitute an ABC transporter 1 domain; it reads ISIRNLRKEF…FGVGYLLTIS (236 aa). Residue 528–535 participates in ATP binding; it reads GPNGSGKS. 7 helical membrane-spanning segments follow: residues 855–875, 1022–1042, 1075–1095, 1106–1126, 1135–1155, 1174–1194, and 1218–1238; these read IKSF…GLIL, FVAI…IAAS, IWDY…IIAV, YISG…LMSF, VGAI…ISFI, IIEY…ILAI, and LLPN…ILLI. One can recognise an ABC transporter 2 domain in the interval 1293–1528; the sequence is IIFNNLYKKF…FGSGYSIEVK (236 aa). Residue 1331-1338 coordinates ATP; it reads GLNGCGKS.

This sequence belongs to the ABC transporter superfamily. ABCA family.

Its subcellular location is the membrane. In Dictyostelium discoideum (Social amoeba), this protein is ABC transporter A family member 4 (abcA4).